We begin with the raw amino-acid sequence, 204 residues long: Small ribosomal subunit protein uS4 (204 aa).

The tract at residues 1–46 (MSKRHSSKYKIDRRMGENIWGRPKSPVNRREYGPGQHGQRRRSKIS) is disordered. An S4 RNA-binding domain is found at 94–157 (RRLDMIVYRA…QEMALVLEAQ (64 aa)).

This sequence belongs to the universal ribosomal protein uS4 family. Part of the 30S ribosomal subunit. Contacts protein S5. The interaction surface between S4 and S5 is involved in control of translational fidelity.

In terms of biological role, one of the primary rRNA binding proteins, it binds directly to 16S rRNA where it nucleates assembly of the body of the 30S subunit. Functionally, with S5 and S12 plays an important role in translational accuracy. This chain is Small ribosomal subunit protein uS4, found in Zymomonas mobilis subsp. mobilis (strain ATCC 31821 / ZM4 / CP4).